The sequence spans 385 residues: Leucine aminopeptidase 1 (385 aa).

The first 19 residues, 1–19 (MKFPNLLSLGVAASTTVLA), serve as a signal peptide directing secretion. Positions 20–87 (AVPNQKPIGD…FPRTFAQTTV (68 aa)) are excised as a propeptide. A glycan (N-linked (GlcNAc...) asparagine) is linked at asparagine 177. Histidine 185, aspartate 204, glutamate 243, and aspartate 270 together coordinate Zn(2+). Cysteine 319 and cysteine 323 form a disulfide bridge. Zn(2+) is bound at residue histidine 352.

Belongs to the peptidase M28 family. M28E subfamily. As to quaternary structure, monomer. The cofactor is Zn(2+).

Its subcellular location is the secreted. Its function is as follows. Extracellular aminopeptidase that allows assimilation of proteinaceous substrates. In Ajellomyces capsulatus (strain H88) (Darling's disease fungus), this protein is Leucine aminopeptidase 1 (LAP1).